A 222-amino-acid chain; its full sequence is Phosphoribosylformylglycinamidine synthase subunit PurQ (222 aa).

A Glutamine amidotransferase type-1 domain is found at 3–222 (AAVVVFPGSN…RALAGALTPA (220 aa)). The active-site Nucleophile is C86. Residues H194 and E196 contribute to the active site.

Part of the FGAM synthase complex composed of 1 PurL, 1 PurQ and 2 PurS subunits.

The protein resides in the cytoplasm. The catalysed reaction is N(2)-formyl-N(1)-(5-phospho-beta-D-ribosyl)glycinamide + L-glutamine + ATP + H2O = 2-formamido-N(1)-(5-O-phospho-beta-D-ribosyl)acetamidine + L-glutamate + ADP + phosphate + H(+). It catalyses the reaction L-glutamine + H2O = L-glutamate + NH4(+). Its pathway is purine metabolism; IMP biosynthesis via de novo pathway; 5-amino-1-(5-phospho-D-ribosyl)imidazole from N(2)-formyl-N(1)-(5-phospho-D-ribosyl)glycinamide: step 1/2. Functionally, part of the phosphoribosylformylglycinamidine synthase complex involved in the purines biosynthetic pathway. Catalyzes the ATP-dependent conversion of formylglycinamide ribonucleotide (FGAR) and glutamine to yield formylglycinamidine ribonucleotide (FGAM) and glutamate. The FGAM synthase complex is composed of three subunits. PurQ produces an ammonia molecule by converting glutamine to glutamate. PurL transfers the ammonia molecule to FGAR to form FGAM in an ATP-dependent manner. PurS interacts with PurQ and PurL and is thought to assist in the transfer of the ammonia molecule from PurQ to PurL. The chain is Phosphoribosylformylglycinamidine synthase subunit PurQ from Ruegeria pomeroyi (strain ATCC 700808 / DSM 15171 / DSS-3) (Silicibacter pomeroyi).